Here is a 275-residue protein sequence, read N- to C-terminus: Light-independent protochlorophyllide reductase iron-sulfur ATP-binding protein (275 aa).

ATP contacts are provided by residues Gly-12–Thr-17 and Lys-41. Position 16 (Ser-16) interacts with Mg(2+). Cys-97 and Cys-131 together coordinate [4Fe-4S] cluster. Asn-182 to Arg-183 contributes to the ATP binding site.

The protein belongs to the NifH/BchL/ChlL family. In terms of assembly, homodimer. Protochlorophyllide reductase is composed of three subunits; BchL, BchN and BchB. It depends on [4Fe-4S] cluster as a cofactor.

It catalyses the reaction chlorophyllide a + oxidized 2[4Fe-4S]-[ferredoxin] + 2 ADP + 2 phosphate = protochlorophyllide a + reduced 2[4Fe-4S]-[ferredoxin] + 2 ATP + 2 H2O. It participates in porphyrin-containing compound metabolism; bacteriochlorophyll biosynthesis (light-independent). Its function is as follows. Component of the dark-operative protochlorophyllide reductase (DPOR) that uses Mg-ATP and reduced ferredoxin to reduce ring D of protochlorophyllide (Pchlide) to form chlorophyllide a (Chlide). This reaction is light-independent. The L component serves as a unique electron donor to the NB-component of the complex, and binds Mg-ATP. The chain is Light-independent protochlorophyllide reductase iron-sulfur ATP-binding protein from Pelodictyon phaeoclathratiforme (strain DSM 5477 / BU-1).